A 96-amino-acid chain; its full sequence is Uteroglobin (96 aa).

An N-terminal signal peptide occupies residues 1 to 19 (MKIAITITVLMLSICCSSA).

It belongs to the secretoglobin family. Antiparallel homodimer; disulfide-linked. Interaction with LMBR1L is controversial. Club cells (nonciliated cells of the surface epithelium of the pulmonary airways).

It is found in the secreted. Its function is as follows. Binds phosphatidylcholine, phosphatidylinositol, polychlorinated biphenyls (PCB) and weakly progesterone, potent inhibitor of phospholipase A2. In Rattus norvegicus (Rat), this protein is Uteroglobin (Scgb1a1).